We begin with the raw amino-acid sequence, 307 residues long: Mitochondrial 2-oxodicarboxylate carrier 2 (307 aa).

Transmembrane regions (helical) follow at residues 10–30 (LPFIYQFISGAVAGISELTVM), 76–95 (SRLYRGISSPMLMEAPKRAT), 122–142 (IAAGASAGMTEAAVIVPFELI), 171–191 (GLYKGIESTMWRNALWNGGYF), 215–235 (LIAGAIGGTVGTMLNTPFDVV), and 280–300 (CRLAPGGSLMLVVFTGMMNFF). Solcar repeat units lie at residues 10–106 (LPFI…YQKI), 116–200 (TTQK…VRNS), and 209–299 (QKTR…MMNF).

This sequence belongs to the mitochondrial carrier (TC 2.A.29) family.

It localises to the mitochondrion inner membrane. In terms of biological role, transports C5-C7 oxodicarboxylates across the inner membranes of mitochondria. Can transport 2-oxoadipate, 2-oxoglutarate, adipate, glutarate, 2-oxopimelate, oxaloacetate, citrate and malate. The main physiological role is probably to supply 2-oxoadipate and 2-oxoglutarate from the mitochondrial matrix to the cytosol where they are used in the biosynthesis of lysine and glutamate, respectively, and in lysine catabolism. This Saccharomyces cerevisiae (strain ATCC 204508 / S288c) (Baker's yeast) protein is Mitochondrial 2-oxodicarboxylate carrier 2 (ODC2).